The chain runs to 86 residues: Cell division topological specificity factor (86 aa).

The protein belongs to the MinE family.

Its function is as follows. Prevents the cell division inhibition by proteins MinC and MinD at internal division sites while permitting inhibition at polar sites. This ensures cell division at the proper site by restricting the formation of a division septum at the midpoint of the long axis of the cell. In Shewanella frigidimarina (strain NCIMB 400), this protein is Cell division topological specificity factor.